A 226-amino-acid chain; its full sequence is Ribonuclease 3 (226 aa).

One can recognise an RNase III domain in the interval 7-129; sequence LPRLCRTLGY…IIGAVYLDAD (123 aa). Residue Glu-42 participates in Mg(2+) binding. Residue Asp-46 is part of the active site. Mg(2+)-binding residues include Asp-115 and Glu-118. The active site involves Glu-118. The 71-residue stretch at 156-226 folds into the DRBM domain; the sequence is DAKTLLQEYL…AAQVLELLNQ (71 aa).

This sequence belongs to the ribonuclease III family. As to quaternary structure, homodimer. Mg(2+) serves as cofactor.

It localises to the cytoplasm. It catalyses the reaction Endonucleolytic cleavage to 5'-phosphomonoester.. Its function is as follows. Digests double-stranded RNA. Involved in the processing of primary rRNA transcript to yield the immediate precursors to the large and small rRNAs (23S and 16S). Processes some mRNAs, and tRNAs when they are encoded in the rRNA operon. Processes pre-crRNA and tracrRNA of type II CRISPR loci if present in the organism. This is Ribonuclease 3 from Shewanella amazonensis (strain ATCC BAA-1098 / SB2B).